A 624-amino-acid polypeptide reads, in one-letter code: Kelch-like ECH-associated protein 1 (624 aa).

Cys-38 carries the S-(2-succinyl)cysteine modification. The BTB domain maps to 77-149 (CDVTLQVKYQ…AYTASISMGE (73 aa)). An N5-[4-(S-L-cysteinyl)-5-methyl-1H-imidazol-2-yl]-L-ornithine (Arg-Cys) (interchain with C-151 in KEAP1) cross-link involves residue Arg-135. Position 151 is an S-(2,3-dicarboxypropyl)cysteine; alternate (Cys-151). Cys-151 bears the S-(2-succinyl)cysteine; alternate mark. Cys-151 bears the S-nitrosocysteine; alternate mark. Residue Cys-151 forms an N5-[4-(S-L-cysteinyl)-5-methyl-1H-imidazol-2-yl]-L-ornithine (Cys-Arg) (interchain with R-135 in KEAP1) linkage. In terms of domain architecture, BACK spans 184–286 (AIGIANFAEQ…TPNFLQMQLQ (103 aa)). Cys-241 carries the post-translational modification S-(2-succinyl)cysteine. Cys-257 and Cys-273 each carry S-(2,3-dicarboxypropyl)cysteine. Cys-288 bears the S-(2,3-dicarboxypropyl)cysteine; alternate mark. An S-(2-succinyl)cysteine; alternate modification is found at Cys-288. Cys-319 carries the S-(2-succinyl)cysteine modification. 6 Kelch repeats span residues 327 to 372 (LIYT…VVGG), 373 to 423 (LLYA…VIDG), 424 to 470 (HIYA…VLNR), 471 to 517 (LLYA…VLHN), 518 to 564 (CIYA…VHQG), and 565 to 611 (RIYV…VTME). The residue at position 434 (Cys-434) is an S-cGMP-cysteine. Cys-613 carries the post-translational modification S-(2-succinyl)cysteine.

It belongs to the KEAP1 family. Component of the BCR(KEAP1) E3 ubiquitin ligase complex, at least composed of 2 molecules of CUL3, 2 molecules of KEAP1, and RBX1. Interacts with NFE2L2/NRF2; the interaction is direct. Forms a ternary complex with NFE2L2/NRF2 and PGAM5. Interacts with (phosphorylated) SQSTM1/p62; the interaction is direct and inactivates the BCR(KEAP1) complex by sequestering it in inclusion bodies, promoting its degradation. Interacts with NFE2L1. Interacts with BPTF and PTMA. Interacts with MAP1LC3B. Interacts indirectly with ENC1. Interacts with SESN1 and SESN2. Interacts with HSP90AA1 and HSP90AB1. Interacts with PGCKA1; this interaction prevents the ubiquitination of KEAP1 by TRIM25, thus protecting KEAP1 from degradation. As to quaternary structure, (Microbial infection) Interacts with ebolavirus protein VP24; this interaction activates transcription factor NFE2L2/NRF2 by blocking its interaction with KEAP1. In terms of processing, non-enzymatic covalent modifications of reactive cysteines by electrophile metabolites inactivate the BCR(KEAP1) complex. Accumulation of fumarate promotes the formation of cysteine S-succination (S-(2-succinyl)cysteine), leading to inactivate the BCR(KEAP1) complex and promote NFE2L2/NRF2 nuclear accumulation and activation. Nitric oxide-dependent 8-Nitro-cGMP formation promotes cysteine guanylation (S-cGMP-cysteine), leading to NFE2L2/NRF2 nuclear accumulation and activation. Itaconate, an anti-inflammatory metabolite generated in response to lipopolysaccharide, alkylates cysteines, activating NFE2L2/NRF2. Methylglyoxal, a reactive metabolite that accumulates when the glycolytic enzyme PGK1 is inhibited, promotes formation of a methylimidazole cross-link between proximal Cys-151 and Arg-135 on another KEAP1 molecule, resulting in an inactive dimer that inactivates the BCR(KEAP1) complex. Degraded via a proteasomal-independent process during selective autophagy: interaction with phosphorylated SQSTM1/p62 sequesters KEAP1 in inclusion bodies, leading to its degradation. Post-translationally, auto-ubiquitinated by the BCR(KEAP1) complex. Quinone-induced oxidative stress, but not sulforaphane, increases its ubiquitination. Ubiquitination and subsequent degradation is most pronounced following prolonged exposure of cells to oxidative stress, particularly in glutathione-deficient cells that are highly susceptible to oxidative stress. Deubiquitinated by USP25; leading to stabilization. Ubiquitinated by TRIM25; leading to degradation upon ER stress. As to expression, broadly expressed, with highest levels in skeletal muscle.

It localises to the cytoplasm. It is found in the nucleus. Its pathway is protein modification; protein ubiquitination. Ubiquitin ligase activity of the BCR(KEAP1) complex is inhibited by oxidative stress and electrophile metabolites such as sulforaphane. Electrophile metabolites react with reactive cysteine residues in KEAP1 and trigger non-enzymatic covalent modifications of these cysteine residues, leading to inactivate the ubiquitin ligase activity of the BCR(KEAP1) complex. Selective autophagy also inactivates the BCR(KEAP1) complex via interaction between KEAP1 and SQSTM1/p62, which sequesters the complex in inclusion bodies and promotes its degradation. Substrate-specific adapter of a BCR (BTB-CUL3-RBX1) E3 ubiquitin ligase complex that regulates the response to oxidative stress by targeting NFE2L2/NRF2 for ubiquitination. KEAP1 acts as a key sensor of oxidative and electrophilic stress: in normal conditions, the BCR(KEAP1) complex mediates ubiquitination and degradation of NFE2L2/NRF2, a transcription factor regulating expression of many cytoprotective genes. In response to oxidative stress, different electrophile metabolites trigger non-enzymatic covalent modifications of highly reactive cysteine residues in KEAP1, leading to inactivate the ubiquitin ligase activity of the BCR(KEAP1) complex, promoting NFE2L2/NRF2 nuclear accumulation and expression of phase II detoxifying enzymes. In response to selective autophagy, KEAP1 is sequestered in inclusion bodies following its interaction with SQSTM1/p62, leading to inactivation of the BCR(KEAP1) complex and activation of NFE2L2/NRF2. The BCR(KEAP1) complex also mediates ubiquitination of SQSTM1/p62, increasing SQSTM1/p62 sequestering activity and degradation. The BCR(KEAP1) complex also targets BPTF and PGAM5 for ubiquitination and degradation by the proteasome. The protein is Kelch-like ECH-associated protein 1 of Homo sapiens (Human).